We begin with the raw amino-acid sequence, 641 residues long: Protein GAMETE EXPRESSED 3 (641 aa).

The N-terminal stretch at Met1–Gln29 is a signal peptide. A helical membrane pass occupies residues Ile441–Phe461. Positions Ile570–Ala627 are disordered. The span at Glu584 to Asp593 shows a compositional bias: basic and acidic residues. The span at Val594 to Asp603 shows a compositional bias: acidic residues.

Expressed in mature siliques and in pollen, mainly in the sperm cells. Detected in the egg cell within the female gametophyte.

The protein resides in the cell membrane. Required for micropylar pollen tube guidance. Plays a role during early embryo patterning. This is Protein GAMETE EXPRESSED 3 (GEX3) from Arabidopsis thaliana (Mouse-ear cress).